The primary structure comprises 367 residues: Aminomethyltransferase (367 aa).

The protein belongs to the GcvT family. As to quaternary structure, the glycine cleavage system is composed of four proteins: P, T, L and H.

The enzyme catalyses N(6)-[(R)-S(8)-aminomethyldihydrolipoyl]-L-lysyl-[protein] + (6S)-5,6,7,8-tetrahydrofolate = N(6)-[(R)-dihydrolipoyl]-L-lysyl-[protein] + (6R)-5,10-methylene-5,6,7,8-tetrahydrofolate + NH4(+). In terms of biological role, the glycine cleavage system catalyzes the degradation of glycine. This is Aminomethyltransferase from Mycobacterium bovis (strain ATCC BAA-935 / AF2122/97).